Here is a 137-residue protein sequence, read N- to C-terminus: Small ribosomal subunit protein uS9 (137 aa).

The segment at 103–137 (PPLKAEGYLTRDPRAKERKKYGLHKARKAPQYSKR) is disordered. Basic residues predominate over residues 118-137 (KERKKYGLHKARKAPQYSKR).

This sequence belongs to the universal ribosomal protein uS9 family.

This is Small ribosomal subunit protein uS9 from Crocosphaera subtropica (strain ATCC 51142 / BH68) (Cyanothece sp. (strain ATCC 51142)).